A 169-amino-acid chain; its full sequence is Photosystem I assembly protein Ycf3 (169 aa).

TPR repeat units lie at residues 35-68, 72-105, and 120-153; these read AFTY…EIDP, SYIL…NPSL, and GEQA…APGN.

It belongs to the Ycf3 family.

Its subcellular location is the plastid. The protein resides in the chloroplast thylakoid membrane. Functionally, essential for the assembly of the photosystem I (PSI) complex. May act as a chaperone-like factor to guide the assembly of the PSI subunits. The protein is Photosystem I assembly protein Ycf3 of Huperzia lucidula (Shining clubmoss).